The sequence spans 327 residues: Ribosomal RNA small subunit methyltransferase H (327 aa).

Residues 36 to 38 (GGH), Asp61, Phe88, Asp114, and Gln121 each bind S-adenosyl-L-methionine.

This sequence belongs to the methyltransferase superfamily. RsmH family.

Its subcellular location is the cytoplasm. It catalyses the reaction cytidine(1402) in 16S rRNA + S-adenosyl-L-methionine = N(4)-methylcytidine(1402) in 16S rRNA + S-adenosyl-L-homocysteine + H(+). Functionally, specifically methylates the N4 position of cytidine in position 1402 (C1402) of 16S rRNA. This Chlorobium phaeovibrioides (strain DSM 265 / 1930) (Prosthecochloris vibrioformis (strain DSM 265)) protein is Ribosomal RNA small subunit methyltransferase H.